The primary structure comprises 293 residues: MQKVTFPNKILPYFLLAPQIVLTVVFFFWPASQAIYQSFMREDAFGLKSTFVELANFTAVLSDPNYLHSVQVTVVFNVLTALLAMGVALLLATAADRVIRGQTFYRTLLIWPYAVAPAVAGMLWLFMFNPAMGTFAYLLRRNGIAWDPLLDGNQAMGLVVVAAAWKQISYNFLFFVAGLQAIPKSLIEAAAIDGARGARRFWTIVFPLLAPTSFFLLVVNTVYAFFDTFGIIHAVTGGGPAKATETLVYKVYNDGFVNLNLGSSSAQSVILMAIVIALTAFQFRFVEKRVHYS.

The next 6 helical transmembrane spans lie at 10–30 (ILPY…FFWP), 72–92 (VTVV…LLLA), 108–128 (LLIW…LFMF), 155–177 (AMGL…FFVA), 204–224 (IVFP…TVYA), and 261–281 (LGSS…LTAF). An ABC transmembrane type-1 domain is found at 66 to 282 (YLHSVQVTVV…AIVIALTAFQ (217 aa)).

It belongs to the binding-protein-dependent transport system permease family. In terms of assembly, the complex is composed of two ATP-binding proteins (UgpC), two transmembrane proteins (UgpA and UgpE) and a solute-binding protein (UgpB).

The protein resides in the cell inner membrane. In terms of biological role, part of the ABC transporter complex UgpBAEC involved in sn-glycerol-3-phosphate (G3P) import. Probably responsible for the translocation of the substrate across the membrane. This chain is sn-glycerol-3-phosphate transport system permease protein UgpA (ugpA), found in Brucella suis biovar 1 (strain 1330).